Here is a 25-residue protein sequence, read N- to C-terminus: Mu-conotoxin CnIIIB (25 aa).

Position 1 is a pyrrolidone carboxylic acid; partial (glutamine 1). Cystine bridges form between cysteine 3–cysteine 15, cysteine 4–cysteine 21, and cysteine 10–cysteine 22.

It belongs to the conotoxin M superfamily. Expressed by the venom duct.

It localises to the secreted. Mu-conotoxins block voltage-gated sodium channels (Nav). This synthetic toxin blocks slightly but irreversibly tetrodotoxin-resistant VGSCs. The protein is Mu-conotoxin CnIIIB of Conus consors (Singed cone).